Consider the following 51-residue polypeptide: Large ribosomal subunit protein eL39 (51 aa).

Belongs to the eukaryotic ribosomal protein eL39 family.

The sequence is that of Large ribosomal subunit protein eL39 (rpl39e) from Thermoplasma acidophilum (strain ATCC 25905 / DSM 1728 / JCM 9062 / NBRC 15155 / AMRC-C165).